Reading from the N-terminus, the 172-residue chain is Peptidyl-prolyl cis-trans isomerase (172 aa).

In terms of domain architecture, PPIase cyclophilin-type spans 7–170 (FFDMAIAGNP…RPVTIADCGQ (164 aa)).

Belongs to the cyclophilin-type PPIase family. Expressed in meristematic tissues, with higher levels in nodules.

It localises to the cytoplasm. The enzyme catalyses [protein]-peptidylproline (omega=180) = [protein]-peptidylproline (omega=0). Binds cyclosporin A (CsA). CsA mediates some of its effects via an inhibitory action on PPIase. Its function is as follows. PPIases accelerate the folding of proteins. It catalyzes the cis-trans isomerization of proline imidic peptide bonds in oligopeptides. This is Peptidyl-prolyl cis-trans isomerase from Lupinus luteus (European yellow lupine).